Reading from the N-terminus, the 90-residue chain is Small ribosomal subunit protein uS15c (90 aa).

Residues 1–11 (MVKNSFSSVIS) show a composition bias toward polar residues. Residues 1-20 (MVKNSFSSVISQEEKKENGG) are disordered.

The protein belongs to the universal ribosomal protein uS15 family. In terms of assembly, part of the 30S ribosomal subunit.

The protein localises to the plastid. It is found in the chloroplast. The chain is Small ribosomal subunit protein uS15c (rps15) from Cucumis sativus (Cucumber).